Here is a 146-residue protein sequence, read N- to C-terminus: Regulator of ribonuclease activity B (146 aa).

A disordered region spans residues 110-146 (WGTYFEDPDGEEEEGDEFDQDDEDGPADRDEVPATRH). A compositionally biased stretch (acidic residues) spans 115 to 134 (EDPDGEEEEGDEFDQDDEDG). Over residues 135–146 (PADRDEVPATRH) the composition is skewed to basic and acidic residues.

This sequence belongs to the RraB family. As to quaternary structure, interacts with the C-terminal region of Rne.

The protein localises to the cytoplasm. Functionally, globally modulates RNA abundance by binding to RNase E (Rne) and regulating its endonucleolytic activity. Can modulate Rne action in a substrate-dependent manner by altering the composition of the degradosome. The protein is Regulator of ribonuclease activity B of Sodalis glossinidius (strain morsitans).